Here is a 672-residue protein sequence, read N- to C-terminus: DNA-directed RNA polymerase subunit gamma (672 aa).

Zn(2+)-binding residues include C70, C72, C85, and C88. Mg(2+) contacts are provided by D466, D468, and D470.

The protein belongs to the RNA polymerase beta' chain family. RpoC1 subfamily. In terms of assembly, in cyanobacteria the RNAP catalytic core is composed of 2 alpha, 1 beta, 1 beta', 1 gamma and 1 omega subunit. When a sigma factor is associated with the core the holoenzyme is formed, which can initiate transcription. It depends on Mg(2+) as a cofactor. Zn(2+) serves as cofactor.

The enzyme catalyses RNA(n) + a ribonucleoside 5'-triphosphate = RNA(n+1) + diphosphate. In terms of biological role, DNA-dependent RNA polymerase catalyzes the transcription of DNA into RNA using the four ribonucleoside triphosphates as substrates. This Trichodesmium erythraeum (strain IMS101) protein is DNA-directed RNA polymerase subunit gamma.